Here is a 139-residue protein sequence, read N- to C-terminus: Metallothiol transferase FosB (139 aa).

The region spanning 4-119 (GINHITYSVS…DGHKLELHTG (116 aa)) is the VOC domain. His-7, His-66, and Glu-115 together coordinate Mg(2+). Catalysis depends on Glu-115, which acts as the Proton donor/acceptor.

This sequence belongs to the fosfomycin resistance protein family. FosB subfamily. Homodimer. Mg(2+) is required as a cofactor.

The protein resides in the cytoplasm. Its function is as follows. Metallothiol transferase which confers resistance to fosfomycin by catalyzing the addition of a thiol cofactor to fosfomycin. L-cysteine is probably the physiological thiol donor. The polypeptide is Metallothiol transferase FosB (Staphylococcus epidermidis).